The sequence spans 531 residues: MPKFVVVTGGVMSGLGKGVVAASVGRILRARGLSVTAVKIDPYLNVDAGTMNPYQHGEVFVTFDGGETDLDLGHYERFLDVELPHRNNITSGQIYKSVIEKERRGDYLGQTVQLIPHVTDEIKRRLVEAAGGFDVAIVEIGGTVGDYEQLPFLEAVRQLRLELGGDVLFVHVAWVPILKTTGEFKTKPLQHSVAELRRYGIQPDAVVVRSERPIDANAVKKISLFAHVPQHAIFNSYDVDTIYKVPLLLERQGMGDFLVERLRLRGRSPDYGEWESFVARLSAPSRKIAVGMCGKYVELPDAYLSIVEALRHAGAALDVRPELVWINSVEVEKNPDLLPKAGVDAMVVLPGFGKRGTEGMIECVRYARTEKIPFLGICFGMQLAVVEFARNVLGLRDANSTELDPQTPHPVVHLAPEQESVDVLGGSMILGNREVEIVPGTLAAALYKASLTVERHRHRFEVNLAYVPKLQEAGLVVSGWRRDVKRVEIIELPAHPYFIATQFHPEFKSRPTRPRPLFLGLLSAAVEQSRR.

Residues 1–264 (MPKFVVVTGG…GDFLVERLRL (264 aa)) form an amidoligase domain region. Serine 13 is a CTP binding site. A UTP-binding site is contributed by serine 13. ATP is bound at residue 14 to 19 (GLGKGV). Tyrosine 54 lines the L-glutamine pocket. ATP is bound at residue aspartate 71. Residues aspartate 71 and glutamate 139 each coordinate Mg(2+). CTP contacts are provided by residues 146–148 (DYE), 185–190 (KTKPLQ), and lysine 221. UTP is bound by residues 185-190 (KTKPLQ) and lysine 221. In terms of domain architecture, Glutamine amidotransferase type-1 spans 293–531 (CGKYVELPDA…LSAAVEQSRR (239 aa)). Glycine 351 serves as a coordination point for L-glutamine. Cysteine 378 acts as the Nucleophile; for glutamine hydrolysis in catalysis. L-glutamine contacts are provided by residues 379-382 (FGMQ), glutamate 402, and arginine 459. Catalysis depends on residues histidine 504 and glutamate 506.

It belongs to the CTP synthase family. In terms of assembly, homotetramer.

It catalyses the reaction UTP + L-glutamine + ATP + H2O = CTP + L-glutamate + ADP + phosphate + 2 H(+). It carries out the reaction L-glutamine + H2O = L-glutamate + NH4(+). The enzyme catalyses UTP + NH4(+) + ATP = CTP + ADP + phosphate + 2 H(+). Its pathway is pyrimidine metabolism; CTP biosynthesis via de novo pathway; CTP from UDP: step 2/2. Allosterically activated by GTP, when glutamine is the substrate; GTP has no effect on the reaction when ammonia is the substrate. The allosteric effector GTP functions by stabilizing the protein conformation that binds the tetrahedral intermediate(s) formed during glutamine hydrolysis. Inhibited by the product CTP, via allosteric rather than competitive inhibition. Its function is as follows. Catalyzes the ATP-dependent amination of UTP to CTP with either L-glutamine or ammonia as the source of nitrogen. Regulates intracellular CTP levels through interactions with the four ribonucleotide triphosphates. In Pyrobaculum calidifontis (strain DSM 21063 / JCM 11548 / VA1), this protein is CTP synthase.